Here is a 185-residue protein sequence, read N- to C-terminus: Probable gluconokinase (185 aa).

Position 11-18 (11-18) interacts with ATP; sequence GVSGSGKS.

The protein belongs to the gluconokinase GntK/GntV family.

It catalyses the reaction D-gluconate + ATP = 6-phospho-D-gluconate + ADP + H(+). Its pathway is carbohydrate acid metabolism; D-gluconate degradation. The polypeptide is Probable gluconokinase (Idnk) (Rattus norvegicus (Rat)).